The following is a 159-amino-acid chain: NAD(P)H-quinone oxidoreductase subunit J, chloroplastic (159 aa).

This sequence belongs to the complex I 30 kDa subunit family. In terms of assembly, NDH is composed of at least 16 different subunits, 5 of which are encoded in the nucleus.

It localises to the plastid. It is found in the chloroplast thylakoid membrane. It carries out the reaction a plastoquinone + NADH + (n+1) H(+)(in) = a plastoquinol + NAD(+) + n H(+)(out). The enzyme catalyses a plastoquinone + NADPH + (n+1) H(+)(in) = a plastoquinol + NADP(+) + n H(+)(out). Its function is as follows. NDH shuttles electrons from NAD(P)H:plastoquinone, via FMN and iron-sulfur (Fe-S) centers, to quinones in the photosynthetic chain and possibly in a chloroplast respiratory chain. The immediate electron acceptor for the enzyme in this species is believed to be plastoquinone. Couples the redox reaction to proton translocation, and thus conserves the redox energy in a proton gradient. In Oryza nivara (Indian wild rice), this protein is NAD(P)H-quinone oxidoreductase subunit J, chloroplastic.